The following is a 70-amino-acid chain: Basic phospholipase A2 2 (70 aa).

Cysteines 28 and 44 form a disulfide. Residue H47 is part of the active site. Residue D48 coordinates Ca(2+).

This sequence belongs to the phospholipase A2 family. Group II subfamily. D49 sub-subfamily. Ca(2+) is required as a cofactor. Expressed by the venom gland.

The protein localises to the secreted. It carries out the reaction a 1,2-diacyl-sn-glycero-3-phosphocholine + H2O = a 1-acyl-sn-glycero-3-phosphocholine + a fatty acid + H(+). In terms of biological role, snake venom phospholipase A2 (PLA2) that exhibits strong myotoxicity. PLA2 catalyzes the calcium-dependent hydrolysis of the 2-acyl groups in 3-sn-phosphoglycerides. The protein is Basic phospholipase A2 2 of Trimeresurus stejnegeri (Chinese green tree viper).